Reading from the N-terminus, the 548-residue chain is Sulochrin halogenase gedL (548 aa).

Residues Gly-14, Ala-17, and Glu-47 each contribute to the FAD site. Chloride contacts are provided by Ser-333 and Gly-334. Val-335 contacts FAD.

Belongs to the flavin-dependent halogenase family.

The enzyme catalyses sulochrin + 2 FADH2 + 2 chloride + 2 O2 = dihydrogeodin + 2 FAD + 4 H2O + H(+). The protein operates within secondary metabolite biosynthesis. Its function is as follows. Sulochrin halogenase; part of the gene cluster that mediates the biosynthesis of geodin, an intermediate in the biosynthesis of other natural products. The pathway begins with the synthesis of atrochrysone thioester by the polyketide synthase (PKS) gedC. The atrochrysone carboxyl ACP thioesterase gedB then breaks the thioester bond and releases the atrochrysone carboxylic acid from gedC. The atrochrysone carboxylic acid is then converted to atrochrysone which is further transformed into emodinanthrone. The next step is performed by the emodinanthrone oxygenase gedH that catalyzes the oxidation of emodinanthrone to emodin. Emodin O-methyltransferase encoded probably by gedA then catalyzes methylation of the 8-hydroxy group of emodin to form questin. Ring cleavage of questin by questin oxidase gedK leads to desmethylsulochrin via several intermediates including questin epoxide. Another methylation step probably catalyzed by methyltransferase gedG leads to the formation of sulochrin which is further converted to dihydrogeodin by the sulochrin halogenase gedL. Finally, the dihydrogeodin oxidase gedJ catalyzes the stereospecific phenol oxidative coupling reaction converting dihydrogeodin to geodin. The polypeptide is Sulochrin halogenase gedL (Aspergillus terreus (strain NIH 2624 / FGSC A1156)).